A 638-amino-acid polypeptide reads, in one-letter code: Threonine--tRNA ligase (638 aa).

Residues 1–61 enclose the TGS domain; the sequence is MPIITLPDGT…DYDAEIKIIT (61 aa). Residues 242–533 are catalytic; it reads DHRKIGKKMD…LIENYAGNFP (292 aa). The Zn(2+) site is built by Cys333, His384, and His510.

Belongs to the class-II aminoacyl-tRNA synthetase family. Homodimer. It depends on Zn(2+) as a cofactor.

It is found in the cytoplasm. The catalysed reaction is tRNA(Thr) + L-threonine + ATP = L-threonyl-tRNA(Thr) + AMP + diphosphate + H(+). Catalyzes the attachment of threonine to tRNA(Thr) in a two-step reaction: L-threonine is first activated by ATP to form Thr-AMP and then transferred to the acceptor end of tRNA(Thr). Also edits incorrectly charged L-seryl-tRNA(Thr). This chain is Threonine--tRNA ligase, found in Prochlorococcus marinus (strain MIT 9211).